A 357-amino-acid chain; its full sequence is MLHILCQGTPFEIGYEHGSAAKAVIARSIDFAVDLIRGKTKKTDEELKQVLSQLGRVIEERWPKYYEEIRGIAKGAERDVSEIVMLNTRTEFAYGLKAARDGCTTAYCQLPNGALQGQNWDFFSATKENLIRLTIRQAGLPTIKFITEAGIIGKVGFNSAGVAVNYNALHLQGLRPTGVPSHIALRIALESTSPSQAYDRIVEQGGMAASAFIMVGNGHEAFGLEFSPTSIRKQVLDANGRMVHTNHCLLQHGKNEKELDPLPDSWNRHQRMEFLLDGFDGTKQAFAQLWADEDNYPFSICRAYEEGKSRGATLFNIIYDHARREATVRLGRPTNPDEMFVMRFDEEDERSALNARL.

Positions 121 and 310 each coordinate 6-aminopenicillanate.

The protein belongs to the peptidase C45 family. In terms of assembly, the active form of the enzyme results from processing of the 40-kDa monomeric precursor to a heterodimer containing subunits of 11 and 29 kDa. In terms of processing, the pre-AAT protein is synthesized as 40 kDa precursor which is then self-processed into an 11 kDa (protein A) and a 29 kDa (protein B). The B protein carries AAT activity.

It localises to the peroxisome matrix. The enzyme catalyses isopenicillin N + phenylacetyl-CoA + H2O = penicillin G + L-2-aminoadipate + CoA + H(+). It functions in the pathway antibiotic biosynthesis; penicillin G biosynthesis; penicillin G from L-alpha-aminoadipate and L-cysteine and L-valine: step 3/3. In terms of biological role, isopenicillin-N N-acyltransferase; part of the gene cluster that mediates the biosynthesis of penicillin, the world's most important antibiotic. AatA catalyzes the exchange of the alpha-aminoadipyl side chain of isopenicillin N for phenylacetic acid to yield penicillin. This step occurs in the peroxisomal matrix and the penM and paaT transporters are involved in the isopenicillin N and phenylacetic acid import into the peroxisome, respectively. The penicillin biosynthesis occurs via 3 enzymatic steps, the first corresponding to the production of the tripeptide N-[(5S)-5-amino-5-carboxypentanoyl]-L-cysteinyl-D-valine (LLD-ACV or ACV) by the NRPS acvA. The tripeptide ACV is then cyclized to isopenicillin N (IPN) by the isopenicillin N synthase ipnA that forms the beta-lactam nucleus. Finally, the alpha-aminoadipyl side chain is exchanged for phenylacetic acid by the isopenicillin N acyltransferase aatA to yield penicillin in the peroxisomal matrix. The sequence is that of Isopenicillin-N N-acyltransferase from Penicillium chrysogenum (Penicillium notatum).